The primary structure comprises 1184 residues: Cartilage intermediate layer protein 1 (1184 aa).

The signal sequence occupies residues 1 to 21 (MAAIKTWVFSFLVLEVTTVLG). 2 N-linked (GlcNAc...) asparagine glycosylation sites follow: asparagine 129 and asparagine 132. Residues 150–201 (HIWSSWSPWSKCSAACGHTGVQTRTRTCLAQTVSLCSEATEEGQLCMSQACT) form the TSP type-1 domain. 4 disulfides stabilise this stretch: cysteine 161-cysteine 195, cysteine 165-cysteine 200, cysteine 177-cysteine 185, and cysteine 330-cysteine 376. The 85-residue stretch at 309–393 (PYIVMNPEMK…AVKSKVTQLT (85 aa)) folds into the Ig-like C2-type domain. N-linked (GlcNAc...) asparagine glycans are attached at residues asparagine 346, asparagine 420, asparagine 550, asparagine 631, asparagine 1000, and asparagine 1056. The interval 1138–1184 (ARSPATGTVQGRVPAMRQQRASRGGLRRRGSMAPLRFSGVAQQPLSN) is disordered.

In terms of assembly, monomer. Interacts with TGFB1. In terms of processing, cleaved into 2 chains possibly by a furin-like protease upon or preceding secretion. As to expression, expressed in articular and meniscal cartilage (at protein level). Primarily localizes to the superficial and intermediate zones of articular cartilage (at protein level).

It localises to the secreted. The protein resides in the extracellular space. Its subcellular location is the extracellular matrix. In terms of biological role, probably plays a role in cartilage scaffolding. May act by antagonizing TGF-beta1 (TGFB1) and IGF1 functions. Has the ability to suppress IGF1-induced proliferation and sulfated proteoglycan synthesis, and inhibits ligand-induced IGF1R autophosphorylation. May inhibit TGFB1-mediated induction of cartilage matrix genes via its interaction with TGFB1. Overexpression may lead to impair chondrocyte growth and matrix repair and indirectly promote inorganic pyrophosphate (PPi) supersaturation in aging and osteoarthritis cartilage. The protein is Cartilage intermediate layer protein 1 (Cilp) of Mus musculus (Mouse).